Here is a 138-residue protein sequence, read N- to C-terminus: Cysteine desulfuration protein SufE (138 aa).

Residue C51 is the Cysteine persulfide intermediate of the active site.

The protein belongs to the SufE family. Homodimer. Interacts with SufS.

The protein localises to the cytoplasm. It functions in the pathway cofactor biosynthesis; iron-sulfur cluster biosynthesis. In terms of biological role, participates in cysteine desulfuration mediated by SufS. Cysteine desulfuration mobilizes sulfur from L-cysteine to yield L-alanine and constitutes an essential step in sulfur metabolism for biosynthesis of a variety of sulfur-containing biomolecules. Functions as a sulfur acceptor for SufS, by mediating the direct transfer of the sulfur atom from the S-sulfanylcysteine of SufS, an intermediate product of cysteine desulfuration process. The polypeptide is Cysteine desulfuration protein SufE (Pectobacterium atrosepticum (strain SCRI 1043 / ATCC BAA-672) (Erwinia carotovora subsp. atroseptica)).